Here is a 481-residue protein sequence, read N- to C-terminus: Zinc metalloproteinase/disintegrin (481 aa).

The first 20 residues, 1 to 20 (MIQVLLVTICLAVFPYQGSS), serve as a signal peptide directing secretion. Residues 21–190 (IILESGNVDD…KASQLYLTPE (170 aa)) constitute a propeptide that is removed on maturation. Residues 197–392 (RYIKLAIVVD…DNPQCILNAP (196 aa)) form the Peptidase M12B domain. Cystine bridges form between cysteine 308–cysteine 387, cysteine 349–cysteine 371, and cysteine 351–cysteine 354. Position 333 (histidine 333) interacts with Zn(2+). The active site involves glutamate 334. The Zn(2+) site is built by histidine 337 and histidine 343. Residues 393 to 408 (LRTDTVSTPVSGNEFL) constitute a propeptide that is removed on maturation. Residues 400–481 (TPVSGNEFLE…GDCPRNPFHA (82 aa)) enclose the Disintegrin domain. Intrachain disulfides connect cysteine 414–cysteine 429, cysteine 416–cysteine 424, cysteine 423–cysteine 446, cysteine 437–cysteine 443, cysteine 442–cysteine 467, and cysteine 455–cysteine 474. The Cell attachment site motif lies at 459–461 (RGD).

It belongs to the venom metalloproteinase (M12B) family. P-II subfamily. P-IIa sub-subfamily. As to quaternary structure, monomer. Requires Zn(2+) as cofactor. In terms of tissue distribution, expressed by the venom gland.

It is found in the secreted. In terms of biological role, impairs hemostasis in the envenomed animal. Its function is as follows. Disintegrin elegantin-2a-f: inhibits platelet aggregation induced by ADP, thrombin, platelet-activating factor and collagen. Acts by inhibiting fibrinogen interaction with platelet receptors GPIIb/GPIIIa (ITGA2B/ITGB3). This is Zinc metalloproteinase/disintegrin from Protobothrops elegans (Elegant pitviper).